The chain runs to 478 residues: Glutamate-1-semialdehyde 2,1-aminomutase, chloroplastic (478 aa).

The residue at position 318 (K318) is an N6-(pyridoxal phosphate)lysine.

Belongs to the class-III pyridoxal-phosphate-dependent aminotransferase family. HemL subfamily. Homodimer. Pyridoxal 5'-phosphate serves as cofactor.

The protein resides in the plastid. It is found in the chloroplast. It catalyses the reaction (S)-4-amino-5-oxopentanoate = 5-aminolevulinate. It functions in the pathway porphyrin-containing compound metabolism; protoporphyrin-IX biosynthesis; 5-aminolevulinate from L-glutamyl-tRNA(Glu): step 2/2. The protein operates within porphyrin-containing compound metabolism; chlorophyll biosynthesis. This chain is Glutamate-1-semialdehyde 2,1-aminomutase, chloroplastic (GSA), found in Nicotiana tabacum (Common tobacco).